A 204-amino-acid polypeptide reads, in one-letter code: Protein GET1 (204 aa).

Residues 1–4 (MPSL) lie on the Lumenal side of the membrane. Residues 5-24 (LLIIFVTELVVQLVNTLGAT) form a helical membrane-spanning segment. Topologically, residues 25–110 (TINDLLWRIY…KFDRTLTTTR (86 aa)) are cytoplasmic. Positions 72-107 (AKWAKLRRQHDKLLEDLEKKKASLEAARTKFDRTLT) form a coiled coil. The chain crosses the membrane as a helical span at residues 111–131 (TVSTRSVQWFLPFWYSKEPMF). At 132-155 (WLPYGWFPYYVEWFASFPRAPMGS) the chain is on the lumenal side. A helical transmembrane segment spans residues 156-172 (VSIVVWQWACTAVIALM). Topologically, residues 173–204 (IEAATAALVYVAAKQSQKIRQPVPAQSEKKDS) are cytoplasmic.

The protein belongs to the WRB/GET1 family. As to quaternary structure, interacts with GET3.

The protein resides in the endoplasmic reticulum membrane. In terms of biological role, required for the post-translational delivery of tail-anchored (TA) proteins to the endoplasmic reticulum. Acts as a membrane receptor for soluble GET3, which recognizes and selectively binds the transmembrane domain of TA proteins in the cytosol. The protein is Protein GET1 of Podospora anserina (strain S / ATCC MYA-4624 / DSM 980 / FGSC 10383) (Pleurage anserina).